The chain runs to 562 residues: Long-chain-fatty-acid--CoA ligase (562 aa).

213 to 224 (YTGGTTGVAKGA) lines the ATP pocket.

Belongs to the ATP-dependent AMP-binding enzyme family. It depends on Mg(2+) as a cofactor.

The protein localises to the membrane. It catalyses the reaction a long-chain fatty acid + ATP + CoA = a long-chain fatty acyl-CoA + AMP + diphosphate. Its pathway is lipid metabolism; fatty acid beta-oxidation. Functionally, catalyzes the esterification, concomitant with transport, of exogenous long-chain fatty acids into metabolically active CoA thioesters for subsequent degradation or incorporation into phospholipids. In Yersinia pestis, this protein is Long-chain-fatty-acid--CoA ligase (fadD).